The primary structure comprises 346 residues: Annexin A1 (346 aa).

Position 2 is an N-acetylalanine (A2). Phosphoserine; by TRPM7 is present on S5. An Isoglutamyl lysine isopeptide (Gln-Lys) (interchain with K-?) cross-link involves residue Q19. Residue Y21 is modified to Phosphotyrosine. S27 is modified (phosphoserine; by PKC). A phosphoserine mark is found at S34 and S37. Annexin repeat units lie at residues 42 to 113, 114 to 185, 197 to 269, and 273 to 344; these read FNVS…AMLK, TPAQ…ALAK, DLAD…TIVK, and STPA…ALCG. Position 58 is an N6-acetyllysine (K58). Ca(2+) contacts are provided by G59, V60, E62, R97, L100, E105, M127, G129, G131, T132, and E134. T136 carries the phosphothreonine modification. Ca(2+) contacts are provided by D171, G210, and R213. K214 is covalently cross-linked (Glycyl lysine isopeptide (Lys-Gly) (interchain with G-Cter in SUMO1); alternate). K214 participates in a covalent cross-link: Glycyl lysine isopeptide (Lys-Gly) (interchain with G-Cter in SUMO2); alternate. Positions 215, 253, 255, and 256 each coordinate Ca(2+). K257 participates in a covalent cross-link: Glycyl lysine isopeptide (Lys-Gly) (interchain with G-Cter in SUMO1). Ca(2+) contacts are provided by E261, M286, G288, and G290. The residue at position 312 (K312) is an N6-acetyllysine. The cysteines at positions 324 and 343 are disulfide-linked. Ca(2+) contacts are provided by L328, E330, and T331. K332 participates in a covalent cross-link: Glycyl lysine isopeptide (Lys-Gly) (interchain with G-Cter in SUMO1). Residue E336 coordinates Ca(2+).

Belongs to the annexin family. Homodimer; non-covalently linked. Homodimer; linked by transglutamylation. Homodimers linked by transglutamylation are observed in placenta, but not in other tissues. Interacts with S100A11. Heterotetramer, formed by two molecules each of S100A11 and ANXA1. Interacts with DYSF. Interacts with EGFR. Post-translationally, phosphorylated by protein kinase C, EGFR and TRPM7. Phosphorylated in response to EGF treatment. Sumoylated. In terms of processing, proteolytically cleaved by cathepsin CTSG to release the active N-terminal peptide Ac2-26. In terms of tissue distribution, detected in lung. Detected at the apical membrane of airway epithelial cells. Detected in intestinal epithelial cells. Detected in skeletal muscle. Detected in prostate. Detected in thymus (at protein level). Detected in stomach, lung, spleen, ovary and uterus, and at lower levels in kidney, thymus and heart.

The protein resides in the nucleus. It is found in the cytoplasm. It localises to the cell projection. The protein localises to the cilium. Its subcellular location is the basolateral cell membrane. The protein resides in the lateral cell membrane. It is found in the cell membrane. It localises to the apical cell membrane. The protein localises to the membrane. Its subcellular location is the early endosome. The protein resides in the cytoplasmic vesicle membrane. It is found in the endosome membrane. It localises to the secreted. The protein localises to the extracellular space. Its subcellular location is the extracellular exosome. The protein resides in the cytoplasmic vesicle. It is found in the secretory vesicle lumen. It localises to the phagocytic cup. In terms of biological role, plays important roles in the innate immune response as effector of glucocorticoid-mediated responses and regulator of the inflammatory process. Has anti-inflammatory activity. Plays a role in glucocorticoid-mediated down-regulation of the early phase of the inflammatory response. Contributes to the adaptive immune response by enhancing signaling cascades that are triggered by T-cell activation, regulates differentiation and proliferation of activated T-cells. Promotes the differentiation of T-cells into Th1 cells and negatively regulates differentiation into Th2 cells. Has no effect on unstimulated T-cells. Negatively regulates hormone exocytosis via activation of the formyl peptide receptors and reorganization of the actin cytoskeleton. Has high affinity for Ca(2+) and can bind up to eight Ca(2+) ions. Displays Ca(2+)-dependent binding to phospholipid membranes. Plays a role in the formation of phagocytic cups and phagosomes. Plays a role in phagocytosis by mediating the Ca(2+)-dependent interaction between phagosomes and the actin cytoskeleton. Functions at least in part by activating the formyl peptide receptors and downstream signaling cascades. Promotes chemotaxis of granulocytes and monocytes via activation of the formyl peptide receptors. Promotes rearrangement of the actin cytoskeleton, cell polarization and cell migration. Promotes resolution of inflammation and wound healing. Acts via neutrophil N-formyl peptide receptors to enhance the release of CXCL2. The polypeptide is Annexin A1 (Anxa1) (Mus musculus (Mouse)).